The sequence spans 287 residues: MAGGREIKTKIKSVQNTRKVTRALEMVSASKIRKAQERMKTSRPYAQAMKQVIGHLAQASTDFQHPFLIEREQVKRVGYIVISSDRGLAGGLNNNLFRKMLGEVRPWQDKGAEIDVVTIGQKASAFFRRVKVNMVGSVTHLGDSPQVEQLIGVIKVMIDAFIEGKVDRVYLVYNRFVNTMTQKASFDQLLPLPAAEHKVAHHDWDYLYEPDAASVLEHVMTRYIESLVYQAVLENVASEHAARMVAMKAASDNANKMIGTLQLVYNKARQAAITQEISEIVSGAAAV.

The protein belongs to the ATPase gamma chain family. In terms of assembly, F-type ATPases have 2 components, CF(1) - the catalytic core - and CF(0) - the membrane proton channel. CF(1) has five subunits: alpha(3), beta(3), gamma(1), delta(1), epsilon(1). CF(0) has three main subunits: a, b and c.

Its subcellular location is the cell inner membrane. In terms of biological role, produces ATP from ADP in the presence of a proton gradient across the membrane. The gamma chain is believed to be important in regulating ATPase activity and the flow of protons through the CF(0) complex. In Xanthomonas axonopodis pv. citri (strain 306), this protein is ATP synthase gamma chain.